The chain runs to 287 residues: 4-hydroxybenzoate octaprenyltransferase (287 aa).

6 helical membrane passes run 30–50 (ALWI…FTVG), 89–109 (WEAV…ILPL), 133–153 (FFAI…PMAF), 158–178 (GHVP…SVAY), 199–221 (ALTF…LGIY), and 267–287 (NNWL…AGSF).

The protein belongs to the UbiA prenyltransferase family. Mg(2+) serves as cofactor.

The protein localises to the cell inner membrane. The enzyme catalyses all-trans-octaprenyl diphosphate + 4-hydroxybenzoate = 4-hydroxy-3-(all-trans-octaprenyl)benzoate + diphosphate. Its pathway is cofactor biosynthesis; ubiquinone biosynthesis. In terms of biological role, catalyzes the prenylation of para-hydroxybenzoate (PHB) with an all-trans polyprenyl group. Mediates the second step in the final reaction sequence of ubiquinone-8 (UQ-8) biosynthesis, which is the condensation of the polyisoprenoid side chain with PHB, generating the first membrane-bound Q intermediate 3-octaprenyl-4-hydroxybenzoate. The sequence is that of 4-hydroxybenzoate octaprenyltransferase from Paraburkholderia phytofirmans (strain DSM 17436 / LMG 22146 / PsJN) (Burkholderia phytofirmans).